The primary structure comprises 267 residues: Protein isy-1 (267 aa).

Residues L175–D204 are a coiled coil. Residues Q195–L221 are disordered.

It belongs to the ISY1 family. As to expression, ubiquitously expressed.

Its subcellular location is the nucleus. In terms of biological role, regulates the processing of the mir-60 microRNA (miRNA), which in turn negatively regulates the expression of the transcription factor zip-10. Does not affect the splicing of zip-10. The chain is Protein isy-1 from Caenorhabditis elegans.